The primary structure comprises 377 residues: MIRKIIYVTGTRADYGLMREVLKRLHQSEDIDLSICVTGMHLDALYGNTVNEIKADQFSICGIIPVDLANAQHSSMAKAIGHELLGFTEVFESETPDVVLLLGDRGEMLAAAIAAIHLNIPVVHLHGGERSGTVDEMVRHAISKLSHYHFVATEASKQRLIRMGEKEETIFQVGAPGLDEIMQYKTSTRDVFNQRYGFDPDKKICLLIYHPVVQEVDSIKIQFQSVIQAALATNLQIICLEPNSDTGGHLIREVIQEYIDHPDVRIIKHLHRPEFIDCLANSDVMLGNSSSGIIEAASFNLNVVNVGSRQNLRERSDNVIDVDVTYDAILTGLREALNKPKIKYSNCYGDGKTSERCYQLLKTIPLHSQILNKCNAY.

Belongs to the UDP-N-acetylglucosamine 2-epimerase family.

The catalysed reaction is UDP-N,N'-diacetylbacillosamine + H2O = 2,4-diacetamido-2,4,6-trideoxy-alpha-D-mannopyranose + UDP + H(+). Functionally, involved in biosynthesis of legionaminic acid (5,7-diamino-3,5,7,9-tetradeoxy-D-glycero-D-galacto-non-2-ulosonic acid)(Leg), a sialic acid-like derivative that is incorporated into virulence-associated cell surface glycoconjugates such as lipopolysaccharide (LPS) which could be a key determinant in the ability of L.pneumophila to inhibit the fusion of phagosomes with lysosomes. LPS contains a majority alpha2,4-linked homomer of legionaminic acid. Catalyzes the conversion of UDP-N,N'-diacetylbacillosamine (Bac2Ac4Ac) into 2,4-diacetamido-2,4,6-trideoxymannose and UDP. This Legionella pneumophila subsp. pneumophila (strain Philadelphia 1 / ATCC 33152 / DSM 7513) protein is UDP-N,N'-diacetylbacillosamine 2-epimerase (hydrolyzing).